The primary structure comprises 313 residues: Ribosomal RNA small subunit methyltransferase H (313 aa).

Residues 35–37, Asp55, Phe79, Asp100, and Gln107 each bind S-adenosyl-L-methionine; that span reads GGH.

This sequence belongs to the methyltransferase superfamily. RsmH family.

The protein localises to the cytoplasm. The enzyme catalyses cytidine(1402) in 16S rRNA + S-adenosyl-L-methionine = N(4)-methylcytidine(1402) in 16S rRNA + S-adenosyl-L-homocysteine + H(+). Functionally, specifically methylates the N4 position of cytidine in position 1402 (C1402) of 16S rRNA. This chain is Ribosomal RNA small subunit methyltransferase H, found in Burkholderia pseudomallei (strain 1106a).